We begin with the raw amino-acid sequence, 192 residues long: uncharacterized protein (192 aa).

The interval 17 to 73 (MLRGSGKKPIQRLAKAPAATASSKTSEWRATTAYGFLPAGGDVRPHSPRYESQGVLS) is disordered. Residues 30–41 (AKAPAATASSKT) are compositionally biased toward low complexity.

This is an uncharacterized protein from Sinorhizobium fredii (strain NBRC 101917 / NGR234).